A 241-amino-acid polypeptide reads, in one-letter code: Bidirectional sugar transporter SWEET17 (241 aa).

Residues 1–3 (MAE) lie on the Vacuolar side of the membrane. Residues 4-24 (ASFYIGVIGNVISVLVFLSPV) form a helical membrane-spanning segment. The MtN3/slv 1 domain occupies 6–92 (FYIGVIGNVI…SLFLFYAPRH (87 aa)). The Cytoplasmic segment spans residues 25–41 (ETFWKIVKRRSTEEYKS). A helical membrane pass occupies residues 42-62 (LPYICTLLGSSLWTYYGIVTP). The Vacuolar segment spans residues 63-69 (GEYLVST). A helical membrane pass occupies residues 70 to 90 (VNGFGALVETIYVSLFLFYAP). The Cytoplasmic portion of the chain corresponds to 91-94 (RHLK). The chain crosses the membrane as a helical span at residues 95 to 115 (LKTVDVDAMLNVFFPIAAIVA). Residues 116 to 128 (TRSAFEDEKMRSQ) lie on the Vacuolar side of the membrane. A helical membrane pass occupies residues 129 to 149 (SIGFISAGLNIIMYGSPLSAM). In terms of domain architecture, MtN3/slv 2 spans 129-212 (SIGFISAGLN…LILYGIYRNA (84 aa)). Over 150 to 161 (KTVVTTKSVKYM) the chain is Cytoplasmic. The chain crosses the membrane as a helical span at residues 162-182 (PFWLSFFLFLNGAIWAVYALL). The Vacuolar segment spans residues 183–185 (QHD). A helical membrane pass occupies residues 186 to 206 (VFLLVPNGVGFVFGTMQLILY). At 207 to 241 (GIYRNAKPVGLSNGLSEIAQDEEEGLTSRVEPLLS) the chain is on the cytoplasmic side.

Belongs to the SWEET sugar transporter family. In terms of assembly, forms homooligomers and heterooligomers with SWEET1, SWEET2, SWEET3, SWEET4, SWEET6, SWEET7, SWEET8, SWEET9, SWEET11, SWEET12, SWEET13, SWEET15 and SWEET16. In terms of tissue distribution, expressed in leaves at low levels, mostly in xylem and parenchyma. Highly expressed in the cortex of roots, predominantly in tips and mature regions, especially in tonoplasts. Also accumulates in cotyledons, stems, flowers, and siliques.

It localises to the vacuole membrane. Functionally, acts as a vacuolar hexose transporter. Regulates fructose (Fru) homeostasis in leaves and roots by exporting/importing Fru through the tonoplast regarding metabolic demand. The chain is Bidirectional sugar transporter SWEET17 from Arabidopsis thaliana (Mouse-ear cress).